A 291-amino-acid polypeptide reads, in one-letter code: Trimeric intracellular cation channel type B (291 aa).

The Lumenal portion of the chain corresponds to 1–15 (MESPWNELTLAFSRT). The chain crosses the membrane as a helical span at residues 16-33 (SMFPFFDIAHYLVSVMAL). Topologically, residues 34–47 (KHQPGAAALAWKNP) are cytoplasmic. A helical membrane pass occupies residues 48 to 69 (LSSWFTAMLHCFGGGILSCVLL). At 70–80 (AEPPLRFLANN) the chain is on the lumenal side. A helical transmembrane segment spans residues 81–100 (TNILLASSIWYIAFFCPCDL). Over 101-103 (ISQ) the chain is Cytoplasmic. A helical membrane pass occupies residues 104–122 (AYSFLPVQLLAAGMKEVTR). A 1,2-diacyl-sn-glycero-3-phospho-(1D-myo-inositol-4,5-bisphosphate)-binding residues include Lys-118 and Arg-122. At 123–138 (TWKIVGGVTHANSYYK) the chain is on the lumenal side. The helical transmembrane segment at 139-156 (NGWIVMIAVGWARGAGGS) threads the bilayer. Over 157–179 (IITNFEQLVKGCWKPEAEEWLKM) the chain is Cytoplasmic. Residues 180 to 196 (SYPAKVTLLGSVIFTFQ) traverse the membrane as a helical segment. The Lumenal segment spans residues 197–207 (QTKYLAISKHN). The helical transmembrane segment at 208–225 (LMFLFTVFLVATKITMMI) threads the bilayer. At 226 to 291 (TKTALVPFAC…VKKKHSKKTE (66 aa)) the chain is on the cytoplasmic side. The interval 257–291 (KSETKSSFNGTGSSTSKPVANASDKVKKKHSKKTE) is disordered. The segment covering 261–274 (KSSFNGTGSSTSKP) has biased composition (polar residues). Residue Ser-262 is modified to Phosphoserine. Positions 282 to 291 (VKKKHSKKTE) are enriched in basic residues.

The protein belongs to the TMEM38 family. As to quaternary structure, homotrimer; conformation seems to be controled by binding to diacylglycerol (DAG).

The protein localises to the endoplasmic reticulum membrane. It carries out the reaction K(+)(in) = K(+)(out). Its activity is regulated as follows. Channel activity is activated by increased cytosolic Ca(2+) levels and blocked by luminal high Ca(2+) levels. In terms of biological role, intracellular monovalent cation channel required for maintenance of rapid intracellular calcium release. Acts as a potassium counter-ion channel that functions in synchronization with calcium release from intracellular stores. Activated by increased cytosolic Ca(2+) levels. The protein is Trimeric intracellular cation channel type B (TMEM38B) of Bos taurus (Bovine).